The chain runs to 179 residues: GTP-dependent dephospho-CoA kinase (179 aa).

Residues Asp-50, Val-51, Val-52, Asp-69, Lys-71, and Glu-126 each coordinate GTP.

This sequence belongs to the GTP-dependent DPCK family.

The enzyme catalyses 3'-dephospho-CoA + GTP = GDP + CoA + H(+). It functions in the pathway cofactor biosynthesis; coenzyme A biosynthesis. In terms of biological role, catalyzes the GTP-dependent phosphorylation of the 3'-hydroxyl group of dephosphocoenzyme A to form coenzyme A (CoA). This chain is GTP-dependent dephospho-CoA kinase, found in Pyrococcus horikoshii (strain ATCC 700860 / DSM 12428 / JCM 9974 / NBRC 100139 / OT-3).